A 743-amino-acid polypeptide reads, in one-letter code: 1,4-alpha-glucan branching enzyme GlgB (743 aa).

Catalysis depends on D416, which acts as the Nucleophile. E469 functions as the Proton donor in the catalytic mechanism.

Belongs to the glycosyl hydrolase 13 family. GlgB subfamily. In terms of assembly, monomer.

The catalysed reaction is Transfers a segment of a (1-&gt;4)-alpha-D-glucan chain to a primary hydroxy group in a similar glucan chain.. The protein operates within glycan biosynthesis; glycogen biosynthesis. Its function is as follows. Catalyzes the formation of the alpha-1,6-glucosidic linkages in glycogen by scission of a 1,4-alpha-linked oligosaccharide from growing alpha-1,4-glucan chains and the subsequent attachment of the oligosaccharide to the alpha-1,6 position. The protein is 1,4-alpha-glucan branching enzyme GlgB of Shewanella baltica (strain OS155 / ATCC BAA-1091).